The following is a 106-amino-acid chain: Large ribosomal subunit protein P1A (106 aa).

A disordered region spans residues 74 to 106 (AGGGAAAEEAAEEEKEEEAKEESDDDMGFGLFD). Residues 82–100 (EAAEEEKEEEAKEESDDDM) show a composition bias toward acidic residues.

This sequence belongs to the eukaryotic ribosomal protein P1/P2 family. As to quaternary structure, component of the large ribosomal subunit (LSU). Mature ribosomes consist of a small (40S) and a large (60S) subunit. The 40S subunit contains about 32 different proteins and 1 molecule of RNA (18S). The 60S subunit contains 45 different proteins and 3 molecules of RNA (25S, 5.8S and 5S). The 5 acidic ribosomal P-proteins form the stalk structure of the 60S subunit. They are organized as a pentameric complex in which uL10/P0 interacts with 2 heterodimers, P1A-P2B and P1B-P2A. Phosphorylated.

It localises to the cytoplasm. In terms of biological role, component of the ribosome, a large ribonucleoprotein complex responsible for the synthesis of proteins in the cell. The small ribosomal subunit (SSU) binds messenger RNAs (mRNAs) and translates the encoded message by selecting cognate aminoacyl-transfer RNA (tRNA) molecules. The large subunit (LSU) contains the ribosomal catalytic site termed the peptidyl transferase center (PTC), which catalyzes the formation of peptide bonds, thereby polymerizing the amino acids delivered by tRNAs into a polypeptide chain. The nascent polypeptides leave the ribosome through a tunnel in the LSU and interact with protein factors that function in enzymatic processing, targeting, and the membrane insertion of nascent chains at the exit of the ribosomal tunnel. In Candida albicans (strain SC5314 / ATCC MYA-2876) (Yeast), this protein is Large ribosomal subunit protein P1A (RPP1A).